Here is a 701-residue protein sequence, read N- to C-terminus: Polyribonucleotide nucleotidyltransferase (701 aa).

Mg(2+)-binding residues include Asp485 and Asp491. Residues 552 to 611 (PKIFKTTVDPEKIRDIIGPGGKMINKIIAKTNVKIDIEPDGRIFVAAPDDISGNRAISMI) form the KH domain. An S1 motif domain is found at 621 to 689 (GQFFLGKVTR…RLGRIALSRK (69 aa)).

Belongs to the polyribonucleotide nucleotidyltransferase family. Mg(2+) serves as cofactor.

The protein localises to the cytoplasm. It carries out the reaction RNA(n+1) + phosphate = RNA(n) + a ribonucleoside 5'-diphosphate. Its function is as follows. Involved in mRNA degradation. Catalyzes the phosphorolysis of single-stranded polyribonucleotides processively in the 3'- to 5'-direction. The protein is Polyribonucleotide nucleotidyltransferase of Caldicellulosiruptor saccharolyticus (strain ATCC 43494 / DSM 8903 / Tp8T 6331).